The primary structure comprises 261 residues: RING finger and CHY zinc finger domain-containing protein 1 (261 aa).

The CHY-type zinc finger occupies 13 to 80 (QERGQRGCEH…AQQTCEECST (68 aa)). Zn(2+)-binding residues include C20, H22, C33, C34, C40, C43, H44, H50, C62, C65, C75, C78, C87, C90, H101, C102, C105, C108, H118, C119, C122, C125, H134, and C136. A CTCHY-type zinc finger spans residues 82–144 (FGEYYCDICH…KCIENVSRQN (63 aa)). The segment at 145 to 189 (CPICLEDIHTSRVVAHVLPCGHLLHRTCYEEMLKEGYRCPLCMHS) adopts an RING-type zinc-finger fold. At S257 the chain carries Phosphoserine.

As to quaternary structure, monomer and homodimer. Interacts with AR, MDM2, KAT5, PLAG1, PLAGL2, COPE, UBE2D2 and GORAB/NTKLBP1. In terms of processing, subject to ubiquitination and proteasomal degradation. Interaction with PLAGL2 or KAT5 enhances protein stability.

Its subcellular location is the nucleus. The protein resides in the nucleus speckle. It is found in the cytoplasm. It catalyses the reaction S-ubiquitinyl-[E2 ubiquitin-conjugating enzyme]-L-cysteine + [acceptor protein]-L-lysine = [E2 ubiquitin-conjugating enzyme]-L-cysteine + N(6)-ubiquitinyl-[acceptor protein]-L-lysine.. Its pathway is protein modification; protein ubiquitination. Its function is as follows. E3 ubiquitin-protein ligase that mediates ubiquitination of target proteins, including p53/TP53, TP73, HDAC1 and CDKN1B. Mediates ubiquitination and degradation of p53/TP53; preferentially acts on tetrameric p53/TP53. Catalyzes monoubiquitinates the translesion DNA polymerase POLH. Involved in the ribosome-associated quality control (RQC) pathway, which mediates the extraction of incompletely synthesized nascent chains from stalled ribosomes: RCHY1 acts downstream of NEMF and recognizes CAT tails associated with stalled nascent chains, leading to their ubiquitination and degradation. Functionally, has no E3 ubiquitin-protein ligase activity. This chain is RING finger and CHY zinc finger domain-containing protein 1 (RCHY1), found in Homo sapiens (Human).